Reading from the N-terminus, the 212-residue chain is Ubiquitin-like protein MDY2 (212 aa).

A Ubiquitin-like domain is found at 74-152 (VHLTLKKIQA…TITVMIKPNP (79 aa)). The segment at 150 to 177 (PNPTISKEPEAEKSTNSPAPAPPQELTV) is disordered.

In terms of assembly, interacts with GET4.

It localises to the cytoplasm. The protein resides in the cytosol. It is found in the nucleus. Functionally, required for efficient mating. Involved in the production of alpha-factor, the KAR9 and TUB1 location to the shmoo tip and nuclear migration into pheromone-induced shmoos. In Saccharomyces cerevisiae (strain ATCC 204508 / S288c) (Baker's yeast), this protein is Ubiquitin-like protein MDY2 (MDY2).